Here is a 447-residue protein sequence, read N- to C-terminus: N-succinylarginine dihydrolase (447 aa).

Residues 19–28 (AGLSFGNEAS), Asn110, and 137–138 (HR) each bind substrate. The active site involves Glu174. Residue Arg212 coordinates substrate. His248 is an active-site residue. Substrate contacts are provided by Asp250 and Asn359. Cys365 (nucleophile) is an active-site residue.

This sequence belongs to the succinylarginine dihydrolase family. In terms of assembly, homodimer.

It carries out the reaction N(2)-succinyl-L-arginine + 2 H2O + 2 H(+) = N(2)-succinyl-L-ornithine + 2 NH4(+) + CO2. Its pathway is amino-acid degradation; L-arginine degradation via AST pathway; L-glutamate and succinate from L-arginine: step 2/5. Functionally, catalyzes the hydrolysis of N(2)-succinylarginine into N(2)-succinylornithine, ammonia and CO(2). This Citrobacter koseri (strain ATCC BAA-895 / CDC 4225-83 / SGSC4696) protein is N-succinylarginine dihydrolase.